We begin with the raw amino-acid sequence, 204 residues long: uncharacterized protein (204 aa).

4 consecutive transmembrane segments (helical) span residues 21–50 (AWIVFFTIPLVITPLPYVGFLAFFFILLFF), 92–114 (FFTALLYYLFTKFYAVLFFWWWF), 150–172 (LGLRWSFIGLVLLTIAVLLVLSI), and 176–198 (LLASFVVLLLSVVLAHFTAETIL).

It localises to the cell membrane. This is an uncharacterized protein from Aquifex aeolicus (strain VF5).